Consider the following 468-residue polypeptide: Transcription factor ste11 (468 aa).

A disordered region spans residues 1–21; that stretch reads MSASLTAEQKDQKSSVKRPLN. The HMG box DNA-binding region spans 16 to 80; sequence VKRPLNSFML…KHMLENPEYK (65 aa). Threonine 173 carries the post-translational modification Phosphothreonine. A phosphoserine mark is found at serine 209, serine 211, and serine 218. Composition is skewed to polar residues over residues 249 to 263 and 274 to 285; these read PSLE…SNCS and GTVSEQSNSDSP. The tract at residues 249–290 is disordered; that stretch reads PSLEANLPQNSSNCSARRVPKFDSKGTVSEQSNSDSPELSAD.

In terms of processing, phosphorylation results in inactivation.

It localises to the nucleus. The protein localises to the cytoplasm. In terms of biological role, key transcription factor for sexual development. Activates the transcription of the matp, matm, mei2, mfm, ste6 and rgs1 genes. Binds specifically to a DNA fragment carrying a 10-base motif 5'-TTCTTTGTTY-3'. The polypeptide is Transcription factor ste11 (ste11) (Schizosaccharomyces pombe (strain 972 / ATCC 24843) (Fission yeast)).